The primary structure comprises 300 residues: tRNA pseudouridine synthase B (300 aa).

Catalysis depends on Asp41, which acts as the Nucleophile.

It belongs to the pseudouridine synthase TruB family. Type 1 subfamily.

It catalyses the reaction uridine(55) in tRNA = pseudouridine(55) in tRNA. In terms of biological role, responsible for synthesis of pseudouridine from uracil-55 in the psi GC loop of transfer RNAs. This Synechococcus sp. (strain WH7803) protein is tRNA pseudouridine synthase B.